An 88-amino-acid polypeptide reads, in one-letter code: Cell division topological specificity factor (88 aa).

The protein belongs to the MinE family.

In terms of biological role, prevents the cell division inhibition by proteins MinC and MinD at internal division sites while permitting inhibition at polar sites. This ensures cell division at the proper site by restricting the formation of a division septum at the midpoint of the long axis of the cell. This chain is Cell division topological specificity factor, found in Herminiimonas arsenicoxydans.